The sequence spans 848 residues: MFERFTDRARRVVVLAQEEARMLNHNYIGTEHILLGLIHEGEGVAAKSLESLGISLEGVRSQVEEIIGQGQQAPSGHIPFTPRAKKVLELSLREALQLGHNYIGTEHILLGLIREGEGVAAQVLVKLGAELTRVRQQVIQLLSGYQGKEAAEAGTGGRGGESGNPSTSLVLDQFGRNLTAAAMEGKLDPVIGREKEIERVMQVLSRRTKNNPVLIGEPGVGKTAVVEGLAQAIVHGEVPETLKDKQLYTLDLGSLVAGSRYRGDFEERLKKVLKEINTRGDIILFIDELHTLVGAGAAEGAIDAASILKPKLARGELQTIGATTLDEYRKYIEKDAALERRFQPVQVGEPTVEHTIEILKGLRDRYEAHHRVSITDSAMVAAATLADRYINDRFLPDKAIDLIDEAGARMRIRRMTAPPDLREFDEKIADARREKESAIDAQDFEKAAALRDKEKQLVAQRAEREKQWRSGDLDVVAEVDDEQIAEVLGNWTGIPVFKLTEEETTRLLRMEEELHKRIIGQEDAVKAVSKAIRRTRAGLKDPKRPSGSFIFAGPSGVGKTELSKALANFLFGDDDALIQIDMGEFHDRFTASRLFGAPPGYVGYEEGGQLTEKVRRKPFSVVLFDEIEKAHQEIYNSLLQVLEDGRLTDGQGRTVDFKNTVLIFTSNLGTSDISKAVGLGFSQGGSENNYERMKQKVHDELKKHFRPEFLNRIDDIIVFHQLTQDEIIQMVDLMIGRVSNQLKTKDMALELSDKAKALLAKRGFDPVLGARPLRRTIQREIEDQLSEKILFEEIGPGQLVTVDVEGWDGEGQGEDAKFTFSGGPKRAETAEPDLAGAGAAGAPTAGTE.

One can recognise a Clp R domain in the interval 2-144 (FERFTDRARR…RQQVIQLLSG (143 aa)). Repeat stretches follow at residues 5 to 70 (FTDR…IGQG) and 80 to 144 (FTPR…LLSG). Positions 425–460 (DEKIADARREKESAIDAQDFEKAAALRDKEKQLVAQ) constitute a UVR domain. ATP is bound by residues 553-560 (GPSGVGKT) and 617-626 (KPFSVVLFDE). The interval 811–848 (GQGEDAKFTFSGGPKRAETAEPDLAGAGAAGAPTAGTE) is disordered. The span at 835–848 (AGAGAAGAPTAGTE) shows a compositional bias: low complexity.

The protein belongs to the ClpA/ClpB family. ClpC subfamily.

Functionally, ATP-dependent specificity component of the Clp protease. It directs the protease to specific substrates. Can perform chaperone functions in the absence of ClpP. Degrades anti-sigma-E factor RseA in the presence of ClpP2. The chain is ATP-dependent Clp protease ATP-binding subunit ClpC1 (clpC1) from Mycolicibacterium smegmatis (strain ATCC 700084 / mc(2)155) (Mycobacterium smegmatis).